The following is a 118-amino-acid chain: Large ribosomal subunit protein uL24 (118 aa).

It belongs to the universal ribosomal protein uL24 family. As to quaternary structure, part of the 50S ribosomal subunit.

Its function is as follows. One of two assembly initiator proteins, it binds directly to the 5'-end of the 23S rRNA, where it nucleates assembly of the 50S subunit. One of the proteins that surrounds the polypeptide exit tunnel on the outside of the subunit. The protein is Large ribosomal subunit protein uL24 of Prochlorococcus marinus (strain MIT 9313).